The chain runs to 62 residues: Photosystem II reaction center protein Z (62 aa).

Transmembrane regions (helical) follow at residues 8-28 (AVFA…VALA) and 41-61 (FSGV…NSFI).

It belongs to the PsbZ family. As to quaternary structure, PSII is composed of 1 copy each of membrane proteins PsbA, PsbB, PsbC, PsbD, PsbE, PsbF, PsbH, PsbI, PsbJ, PsbK, PsbL, PsbM, PsbT, PsbY, PsbZ, Psb30/Ycf12, at least 3 peripheral proteins of the oxygen-evolving complex and a large number of cofactors. It forms dimeric complexes.

It is found in the plastid. The protein resides in the chloroplast thylakoid membrane. Functionally, may control the interaction of photosystem II (PSII) cores with the light-harvesting antenna, regulates electron flow through the 2 photosystem reaction centers. PSII is a light-driven water plastoquinone oxidoreductase, using light energy to abstract electrons from H(2)O, generating a proton gradient subsequently used for ATP formation. In Pinus thunbergii (Japanese black pine), this protein is Photosystem II reaction center protein Z.